We begin with the raw amino-acid sequence, 682 residues long: Potassium-transporting ATPase ATP-binding subunit (682 aa).

The next 4 helical transmembrane spans lie at 34–54, 62–82, 219–239, and 254–274; these read PVMF…IAMA, ALFS…ANFA, IALT…TATL, and VLVA…LSAI. Aspartate 307 (4-aspartylphosphate intermediate) is an active-site residue. Residues aspartate 344, glutamate 348, 377 to 384, and lysine 395 contribute to the ATP site; that span reads FTAQSRMS. Residues aspartate 518 and aspartate 522 each contribute to the Mg(2+) site. Transmembrane regions (helical) follow at residues 588–608, 616–636, and 656–676; these read FAII…LNIM, AILS…PLAL, and IYGL…DLLL.

It belongs to the cation transport ATPase (P-type) (TC 3.A.3) family. Type IA subfamily. As to quaternary structure, the system is composed of three essential subunits: KdpA, KdpB and KdpC.

The protein resides in the cell inner membrane. The catalysed reaction is K(+)(out) + ATP + H2O = K(+)(in) + ADP + phosphate + H(+). Its function is as follows. Part of the high-affinity ATP-driven potassium transport (or Kdp) system, which catalyzes the hydrolysis of ATP coupled with the electrogenic transport of potassium into the cytoplasm. This subunit is responsible for energy coupling to the transport system and for the release of the potassium ions to the cytoplasm. The sequence is that of Potassium-transporting ATPase ATP-binding subunit from Escherichia coli O8 (strain IAI1).